The primary structure comprises 398 residues: Fructose-bisphosphate aldolase 2, chloroplastic (398 aa).

Residues 1 to 46 (MASTSLLKASPVLDKSEWVKGQSVLFRQPSSASVVLRNRATSLTVR) constitute a chloroplast transit peptide. Substrate is bound at residue arginine 95. Serine 157 carries the phosphoserine modification. Residue lysine 185 coordinates substrate. Serine 215 bears the Phosphoserine mark. Residue glutamate 225 is the Proton acceptor of the active site. Residue lysine 267 is the Schiff-base intermediate with dihydroxyacetone-P of the active site. 309-311 (SGG) contributes to the substrate binding site. Lysine 394 carries the post-translational modification N6,N6,N6-trimethyllysine.

This sequence belongs to the class I fructose-bisphosphate aldolase family. As to quaternary structure, homotetramer. Post-translationally, can be trimethylated at Lys-394 by LSMT-L. The methylation level has no influence on the ologomerization state or on the kinetic properties of the enzyme. In terms of processing, phosphorylated on tyrosine residues in response to abscisic acid (ABA) in germinating seeds. As to expression, highly expressed in rosettes leaves.

It localises to the plastid. Its subcellular location is the chloroplast. It is found in the plastoglobule. The protein localises to the chloroplast stroma. It catalyses the reaction beta-D-fructose 1,6-bisphosphate = D-glyceraldehyde 3-phosphate + dihydroxyacetone phosphate. Its pathway is carbohydrate degradation; glycolysis; D-glyceraldehyde 3-phosphate and glycerone phosphate from D-glucose: step 4/4. In terms of biological role, plays a key role in glycolysis and gluconeogenesis. This Arabidopsis thaliana (Mouse-ear cress) protein is Fructose-bisphosphate aldolase 2, chloroplastic.